A 667-amino-acid polypeptide reads, in one-letter code: Fatty acyl-CoA synthetase A (667 aa).

This sequence belongs to the ATP-dependent AMP-binding enzyme family.

It localises to the endosome membrane. The catalysed reaction is a long-chain fatty acid + ATP + CoA = a long-chain fatty acyl-CoA + AMP + diphosphate. Functionally, long chain fatty acid acyl-CoA synthetases catalyze the formation of a thiester bond between a free fatty acid and coenzyme A during fatty acid metabolic process. May mediate fatty acid retrieval from the lumen of endosomes into the cytoplasm. The protein is Fatty acyl-CoA synthetase A (fcsA) of Dictyostelium discoideum (Social amoeba).